The chain runs to 545 residues: SLAIN motif-containing protein 1 (545 aa).

A coiled-coil region spans residues 14 to 53 (TTNGLVANAELEVKKLQELVRKLEKQNEQLRNRASAVSNC). Composition is skewed to low complexity over residues 268–286 (TTSTCSSVSRPRSSFSLYS) and 466–481 (IPSSTSLQSLSSSGIP). 2 disordered regions span residues 268–342 (TTST…IRDC) and 461–526 (QGGS…LQPP). Residues 503–522 (STANGSSIPRSKIAQPQRSF) show a composition bias toward polar residues.

Belongs to the SLAIN motif-containing family.

Its subcellular location is the cytoplasm. The protein localises to the cytoskeleton. Microtubule plus-end tracking protein that might be involved in the regulation of cytoplasmic microtubule dynamics, microtubule organization and microtubule elongation. The chain is SLAIN motif-containing protein 1 (slain1) from Xenopus tropicalis (Western clawed frog).